Reading from the N-terminus, the 131-residue chain is Small ribosomal subunit protein bS16 (131 aa).

Residues 87–131 form a disordered region; sequence PGAEGTYRVPTANTKPPRIPGGGAAKAVEAPAEAPAEAETPASES. Positions 111–131 are enriched in low complexity; sequence AKAVEAPAEAPAEAETPASES.

This sequence belongs to the bacterial ribosomal protein bS16 family.

In Kineococcus radiotolerans (strain ATCC BAA-149 / DSM 14245 / SRS30216), this protein is Small ribosomal subunit protein bS16.